The sequence spans 488 residues: N-succinylglutamate 5-semialdehyde dehydrogenase (488 aa).

Position 221 to 226 (G221 to G226) interacts with NAD(+). Active-site residues include E244 and C278.

Belongs to the aldehyde dehydrogenase family. AstD subfamily.

It carries out the reaction N-succinyl-L-glutamate 5-semialdehyde + NAD(+) + H2O = N-succinyl-L-glutamate + NADH + 2 H(+). Its pathway is amino-acid degradation; L-arginine degradation via AST pathway; L-glutamate and succinate from L-arginine: step 4/5. In terms of biological role, catalyzes the NAD-dependent reduction of succinylglutamate semialdehyde into succinylglutamate. In Pseudomonas fluorescens (strain SBW25), this protein is N-succinylglutamate 5-semialdehyde dehydrogenase.